We begin with the raw amino-acid sequence, 564 residues long: Probable lysosomal cobalamin transporter (564 aa).

The next 9 helical transmembrane spans lie at 8 to 28, 41 to 61, 94 to 114, 144 to 164, 188 to 208, 312 to 332, 375 to 395, 418 to 438, and 506 to 526; these read LIWS…STFI, VTLI…LLPV, TIVY…GIPF, YTLF…FIPT, ALTF…IIYT, LLAG…LCVT, VIFT…IAAF, LLLT…VAVI, and FFGA…LLVL.

It belongs to the LIMR family. LMBRD1 subfamily.

The protein localises to the lysosome membrane. Its function is as follows. Probable lysosomal cobalamin transporter. Required to export cobalamin from lysosomes allowing its conversion to cofactors. This is Probable lysosomal cobalamin transporter from Aspergillus clavatus (strain ATCC 1007 / CBS 513.65 / DSM 816 / NCTC 3887 / NRRL 1 / QM 1276 / 107).